The following is an 883-amino-acid chain: Valine--tRNA ligase (883 aa).

Positions 52-62 (PNVTGRLHLGH) match the 'HIGH' region motif. The 'KMSKS' region motif lies at 529–533 (KMSKS). K532 lines the ATP pocket. Residues 813-848 (LEGLIDFDKEIKRLENELAKWTKEVERVQKKLSNQG) are a coiled coil.

The protein belongs to the class-I aminoacyl-tRNA synthetase family. ValS type 1 subfamily. In terms of assembly, monomer.

The protein localises to the cytoplasm. The catalysed reaction is tRNA(Val) + L-valine + ATP = L-valyl-tRNA(Val) + AMP + diphosphate. In terms of biological role, catalyzes the attachment of valine to tRNA(Val). As ValRS can inadvertently accommodate and process structurally similar amino acids such as threonine, to avoid such errors, it has a 'posttransfer' editing activity that hydrolyzes mischarged Thr-tRNA(Val) in a tRNA-dependent manner. The chain is Valine--tRNA ligase from Oceanobacillus iheyensis (strain DSM 14371 / CIP 107618 / JCM 11309 / KCTC 3954 / HTE831).